The chain runs to 318 residues: Transaldolase (318 aa).

The active-site Schiff-base intermediate with substrate is Lys132.

The protein belongs to the transaldolase family. Type 1 subfamily. As to quaternary structure, homodimer.

It is found in the cytoplasm. It catalyses the reaction D-sedoheptulose 7-phosphate + D-glyceraldehyde 3-phosphate = D-erythrose 4-phosphate + beta-D-fructose 6-phosphate. It participates in carbohydrate degradation; pentose phosphate pathway; D-glyceraldehyde 3-phosphate and beta-D-fructose 6-phosphate from D-ribose 5-phosphate and D-xylulose 5-phosphate (non-oxidative stage): step 2/3. Functionally, transaldolase is important for the balance of metabolites in the pentose-phosphate pathway. This Shewanella baltica (strain OS223) protein is Transaldolase.